Consider the following 216-residue polypeptide: MTKKYSLGFVGRKAGMSRVFTEDGRSIPVTLIEATPNRIAQIKTVETDGYSAVQVTVGARRAALVNKPEAGHFAKAKVEAGRGLWEFRVEDAQLGDFAVGGEVKADIFEVGQIVDVQGVTKGKGFQGTIKRHNFRMGDATHGNSLSHRAPGSLGQRQTPGRVFPGKKMSGHMGAVQQSTQNLEVVKVDVERGLIAVRGAVPGAAGGDVIVRPASKA.

Q157 carries the N5-methylglutamine modification.

Belongs to the universal ribosomal protein uL3 family. In terms of assembly, part of the 50S ribosomal subunit. Forms a cluster with proteins L14 and L19. Methylated by PrmB.

Functionally, one of the primary rRNA binding proteins, it binds directly near the 3'-end of the 23S rRNA, where it nucleates assembly of the 50S subunit. This Stenotrophomonas maltophilia (strain R551-3) protein is Large ribosomal subunit protein uL3.